The sequence spans 1463 residues: Secretory phospholipase A2 receptor (1463 aa).

An N-terminal signal peptide occupies residues 1–20 (MPLLSLSLLLLLLQVPAGSA). Residues 21 to 1392 (ETAAWAVTPE…IHTVKKHPGK (1372 aa)) are Extracellular-facing. The Ricin B-type lectin domain maps to 38 to 115 (KGIFIIQSEN…CDSTHVSLKW (78 aa)). Asn-93 is a glycosylation site (N-linked (GlcNAc...) asparagine). Residues 173–221 (AHGTPCMFPFQYNQQWHHECTREGREDNLLWCATTSRYERDEKWGFCPD) enclose the Fibronectin type-II domain. Intrachain disulfides connect Cys-178/Cys-204, Cys-192/Cys-219, Cys-260/Cys-354, Cys-330/Cys-346, Cys-406/Cys-501, Cys-478/Cys-493, Cys-617/Cys-634, Cys-699/Cys-796, Cys-774/Cys-788, Cys-840/Cys-938, Cys-915/Cys-930, Cys-992/Cys-1096, Cys-1068/Cys-1088, Cys-1209/Cys-1223, Cys-1280/Cys-1377, and Cys-1354/Cys-1369. 8 consecutive C-type lectin domains span residues 229 to 353 (CDAV…LPYV), 357 to 500 (YLNP…LFYL), 504 to 641 (TGLV…KAMS), 646 to 795 (PVEN…REWI), 799 to 937 (PRDV…MPSI), 941 to 1095 (KKVW…YGFV), 1099 to 1230 (MQDA…LQGA), and 1235 to 1376 (PTET…KGFI). Asn-454 carries N-linked (GlcNAc...) asparagine glycosylation. Asn-1057 carries N-linked (GlcNAc...) asparagine glycosylation. Residues 1393 to 1421 (GPSHSVIPLTVALTLLVILAISTLSFCMY) traverse the membrane as a helical segment. Residues 1422-1463 (KHSHIIFGRLAQFRNPYYPSANFSTVHLEENILISDLEKNDQ) lie on the Cytoplasmic side of the membrane. Positions 1436 to 1442 (NPYYPSA) match the Endocytosis signal motif.

As to quaternary structure, interacts with sPLA2-IB/PLA2G1B; this interaction mediates intracellular signaling as well as clearance of extracellular sPLA2-IB/PLA2G1B via endocytotic pathway. Interacts with sPLA2-X/PLA2G10; this interaction mediates sPLA2-X/PLA2G10 clearance and inactivation. In terms of processing, the secretory phospholipase A2 receptor form may be produced by the action of metalloproteinases. It contains all extracellular domains and only lacks transmembrane and cytosolic regions. It is however unclear whether this form is produced by proteolytic cleavage as suggested by some experiments, or by alternative splicing.

The protein localises to the cell membrane. It is found in the secreted. Receptor for secretory phospholipase A2 (sPLA2). Also able to bind to snake PA2-like toxins. Although its precise function remains unclear, binding of sPLA2 to its receptor participates in both positive and negative regulation of sPLA2 functions as well as clearance of sPLA2. Binding of sPLA2-IB/PLA2G1B induces various effects depending on the cell type, such as activation of the mitogen-activated protein kinase (MAPK) cascade to induce cell proliferation, the production of lipid mediators, selective release of arachidonic acid in bone marrow-derived mast cells. In neutrophils, binding of sPLA2-IB/PLA2G1B can activate p38 MAPK to stimulate elastase release and cell adhesion. May be involved in responses in pro-inflammatory cytokine productions during endotoxic shock. Also has endocytic properties and rapidly internalizes sPLA2 ligands, which is particularly important for the clearance of extracellular sPLA2s to protect their potent enzymatic activities. The soluble secretory phospholipase A2 receptor form is circulating and acts as a negative regulator of sPLA2 functions by blocking the biological functions of sPLA2-IB/PLA2G1B and sPLA2-X/PLA2G10. In Bos taurus (Bovine), this protein is Secretory phospholipase A2 receptor (PLA2R1).